The chain runs to 315 residues: PIH1 domain-containing protein 2 (315 aa).

Belongs to the PIH1 family.

The sequence is that of PIH1 domain-containing protein 2 (PIH1D2) from Homo sapiens (Human).